Here is a 316-residue protein sequence, read N- to C-terminus: Ribosomal RNA small subunit methyltransferase H (316 aa).

S-adenosyl-L-methionine-binding positions include 35-37 (AGH), D55, F84, D105, and Q112.

Belongs to the methyltransferase superfamily. RsmH family.

It is found in the cytoplasm. The catalysed reaction is cytidine(1402) in 16S rRNA + S-adenosyl-L-methionine = N(4)-methylcytidine(1402) in 16S rRNA + S-adenosyl-L-homocysteine + H(+). Its function is as follows. Specifically methylates the N4 position of cytidine in position 1402 (C1402) of 16S rRNA. This chain is Ribosomal RNA small subunit methyltransferase H, found in Streptococcus pneumoniae serotype 4 (strain ATCC BAA-334 / TIGR4).